A 575-amino-acid polypeptide reads, in one-letter code: Phosphoenolpyruvate-protein phosphotransferase (575 aa).

His-191 (tele-phosphohistidine intermediate) is an active-site residue. Phosphoenolpyruvate-binding residues include Arg-298 and Arg-334. 2 residues coordinate Mg(2+): Glu-435 and Asp-459. Phosphoenolpyruvate is bound by residues 458-459 (ND) and Arg-469. Residue Cys-506 is the Proton donor of the active site.

Belongs to the PEP-utilizing enzyme family. In terms of assembly, homodimer. It depends on Mg(2+) as a cofactor.

It localises to the cytoplasm. It carries out the reaction L-histidyl-[protein] + phosphoenolpyruvate = N(pros)-phospho-L-histidyl-[protein] + pyruvate. Its function is as follows. General (non sugar-specific) component of the phosphoenolpyruvate-dependent sugar phosphotransferase system (sugar PTS). This major carbohydrate active-transport system catalyzes the phosphorylation of incoming sugar substrates concomitantly with their translocation across the cell membrane. Enzyme I transfers the phosphoryl group from phosphoenolpyruvate (PEP) to the phosphoryl carrier protein (HPr). This is Phosphoenolpyruvate-protein phosphotransferase (ptsI) from Enterococcus faecalis (strain ATCC 700802 / V583).